Consider the following 463-residue polypeptide: Na(+)/H(+) antiporter NhaA 3 (463 aa).

A run of 11 helical transmembrane segments spans residues 28–48 (FLAT…AALL), 79–99 (LHHW…GLEI), 114–134 (IAVP…IYFV), 144–164 (GWGI…ALFG), 173–193 (LFLL…VGIF), 196–216 (DHLN…ILGL), 232–252 (LVLW…GVLV), 305–325 (VLHP…NAGV), 344–364 (VAAA…VAAI), 377–397 (YGHL…SLFI), and 413–433 (IGIL…LRVL). The disordered stretch occupies residues 444 to 463 (TDEPVPRLPPRPWRAPVPAK). Pro residues predominate over residues 449 to 463 (PRLPPRPWRAPVPAK).

It belongs to the NhaA Na(+)/H(+) (TC 2.A.33) antiporter family.

The protein localises to the cell membrane. It carries out the reaction Na(+)(in) + 2 H(+)(out) = Na(+)(out) + 2 H(+)(in). Na(+)/H(+) antiporter that extrudes sodium in exchange for external protons. The chain is Na(+)/H(+) antiporter NhaA 3 from Frankia alni (strain DSM 45986 / CECT 9034 / ACN14a).